A 372-amino-acid polypeptide reads, in one-letter code: Trihelix transcription factor GT-4 (372 aa).

Residues 47–111 (APKKRAETWA…MCTDKWRNIL (65 aa)) form the Myb-like domain. Residue serine 167 is modified to Phosphoserine.

The protein localises to the nucleus. Functionally, probable transcription factor that binds specific DNA sequence. The polypeptide is Trihelix transcription factor GT-4 (GT-4) (Arabidopsis thaliana (Mouse-ear cress)).